The primary structure comprises 466 residues: MRCLNMIMAEPPGLITICLLGYLLGADCTVFLDHEDATKVLSRPKRYNSGKLEEFVQGNLERECMEEKCSFEEAREVFENTEKTTEFWKQYVDGDQCESNPCLNGGICKDDINSYECWCQTGFEGKNCELDVTCNIKNGRCKQFCKLDADNKVVCSCTTGYQLAEDQKSCEPAVPFPCGRVSVPHISTTHTRAETLFLNMDYENSTTDYENSAEAEKNVDNVTQPLNDLTRIVGGKTAKPGQFPWQVLLKGKIDAFCGGSIINEKWVVTAAHCINPDVEITVVAGEHNTEETEHTEQKRNVIRTILHHSYNASVNKYSHDIALLELDEPLTLNSYVTPICVADREYTNTFLKFGYGYVSGWGKVFNKGRPATILQYLKVPLVDRATCLRSTKFTIYNNMFCAGFHEGGKDSCQGDSGGPHVTEVEGINFLTGIISWGEECAMKGKYGIYTKVSRYVNWIKEKTKLT.

The signal sequence occupies residues M1–G25. Residues A26 to R46 constitute a propeptide that is removed on maturation. Ca(2+) contacts are provided by Y47, N48, E53, E54, E61, E63, E66, E67, E72, E73, and E76. The Gla domain maps to Y47–V92. 4-carboxyglutamate is present on residues E53, E54, E61, E63, E66, E67, E72, E73, E76, E79, and E82. E61 is a binding site for Mg(2+). A disulfide bond links C64 and C69. E66 contributes to the Mg(2+) binding site. A Mg(2+)-binding site is contributed by E72. Residue E76 coordinates Mg(2+). A Ca(2+)-binding site is contributed by E82. E82 is a Mg(2+) binding site. An O-linked (GalNAc...) threonine glycan is attached at T85. The Ca(2+) site is built by E86, D93, G94, and Q96. E86 is subject to 4-carboxyglutamate. E86 serves as a coordination point for Mg(2+). In terms of domain architecture, EGF-like 1; calcium-binding spans D93–E129. 10 disulfide bridges follow: C97–C108, C102–C117, C119–C128, C134–C145, C141–C155, C157–C170, C178–C340, C257–C273, C387–C401, and C412–C440. O-linked (Glc...) serine glycosylation is present at S99. Residues D110 and D111 each contribute to the Ca(2+) site. The residue at position 110 (D110) is a (3R)-3-hydroxyaspartate. S114 is modified (phosphoserine). Positions L130–E171 constitute an EGF-like 2 domain. The propeptide at A193–R231 is activation peptide. Y202 bears the Sulfotyrosine mark. A Phosphoserine modification is found at S205. The residue at position 206 (T206) is a Phosphothreonine; alternate. T206 carries O-linked (GalNAc...) threonine; alternate glycosylation. N221 carries N-linked (GlcNAc...) asparagine glycosylation. Residues T223 and T230 are each glycosylated (O-linked (GalNAc...) threonine). The 233-residue stretch at I232–K464 folds into the Peptidase S1 domain. H272 acts as the Charge relay system in catalysis. Residues E286, N288, E291, E293, and E296 each coordinate Ca(2+). The active-site Charge relay system is D320. The active-site Charge relay system is S416.

This sequence belongs to the peptidase S1 family. In terms of assembly, heterodimer of a light chain and a heavy chain; disulfide-linked. Interacts (inactive and activated) with F11 (activated) in calcium-dependent manner. Interacts with SERPINC1. Post-translationally, the iron and 2-oxoglutarate dependent 3-hydroxylation of aspartate and asparagine is (R) stereospecific within EGF domains. In terms of processing, activated by factor XIa, which excises the activation peptide. The propeptide can also be removed by snake venom protease. Activated by coagulation factor VIIa-tissue factor (F7-F3) complex in calcium-dependent manner. Predominantly O-glucosylated at Ser-99 by POGLUT1 in vitro.

It localises to the secreted. It catalyses the reaction Selective cleavage of Arg-|-Ile bond in factor X to form factor Xa.. Factor IX is a vitamin K-dependent plasma protein that participates in the intrinsic pathway of blood coagulation by converting factor X to its active form in the presence of Ca(2+) ions, phospholipids, and factor VIIIa. The chain is Coagulation factor IX (F9) from Felis catus (Cat).